Consider the following 265-residue polypeptide: uncharacterized protein (265 aa).

The protein localises to the mitochondrion. This is an uncharacterized protein from Paramecium tetraurelia.